Reading from the N-terminus, the 300-residue chain is 4-hydroxy-tetrahydrodipicolinate synthase (300 aa).

Thr56 is a pyruvate binding site. Tyr145 functions as the Proton donor/acceptor in the catalytic mechanism. The active-site Schiff-base intermediate with substrate is Lys173. Val215 contributes to the pyruvate binding site.

This sequence belongs to the DapA family. In terms of assembly, homotetramer; dimer of dimers.

Its subcellular location is the cytoplasm. It catalyses the reaction L-aspartate 4-semialdehyde + pyruvate = (2S,4S)-4-hydroxy-2,3,4,5-tetrahydrodipicolinate + H2O + H(+). It participates in amino-acid biosynthesis; L-lysine biosynthesis via DAP pathway; (S)-tetrahydrodipicolinate from L-aspartate: step 3/4. Functionally, catalyzes the condensation of (S)-aspartate-beta-semialdehyde [(S)-ASA] and pyruvate to 4-hydroxy-tetrahydrodipicolinate (HTPA). The chain is 4-hydroxy-tetrahydrodipicolinate synthase from Prochlorococcus marinus (strain MIT 9301).